The chain runs to 155 residues: Protein FAM162A (155 aa).

The tract at residues 77–103 is required for proapoptotic activity; that stretch reads RFKKEEEIPETISFEMLDAAKNKIRVK. A helical membrane pass occupies residues 102–121; the sequence is VKVSYLMIALTVAGCVYMVI.

Belongs to the UPF0389 family. As to quaternary structure, interacts with HSP90AB1; HSP90AB1 is essential for FAM162A mitochondrial localization and pro-apoptotic activity. Interacts with VDAC2; the interaction is probably involved in inducing mitochondrial permeability transition.

Its subcellular location is the mitochondrion membrane. Proposed to be involved in regulation of apoptosis; the exact mechanism may differ between cell types/tissues. May be involved in hypoxia-induced cell death of transformed cells implicating cytochrome C release and caspase activation (such as CASP9) and inducing mitochondrial permeability transition. May be involved in hypoxia-induced cell death of neuronal cells probably by promoting release of AIFM1 from mitochondria to cytoplasm and its translocation to the nucleus; however, the involvement of caspases has been reported conflictingly. The sequence is that of Protein FAM162A (Fam162a) from Rattus norvegicus (Rat).